The sequence spans 417 residues: Serine hydroxymethyltransferase (417 aa).

(6S)-5,6,7,8-tetrahydrofolate-binding positions include L120 and 124–126 (GHL). The residue at position 229 (K229) is an N6-(pyridoxal phosphate)lysine. 354–356 (SPF) contributes to the (6S)-5,6,7,8-tetrahydrofolate binding site.

The protein belongs to the SHMT family. As to quaternary structure, homodimer. Requires pyridoxal 5'-phosphate as cofactor.

It is found in the cytoplasm. The catalysed reaction is (6R)-5,10-methylene-5,6,7,8-tetrahydrofolate + glycine + H2O = (6S)-5,6,7,8-tetrahydrofolate + L-serine. It functions in the pathway one-carbon metabolism; tetrahydrofolate interconversion. It participates in amino-acid biosynthesis; glycine biosynthesis; glycine from L-serine: step 1/1. Its function is as follows. Catalyzes the reversible interconversion of serine and glycine with tetrahydrofolate (THF) serving as the one-carbon carrier. This reaction serves as the major source of one-carbon groups required for the biosynthesis of purines, thymidylate, methionine, and other important biomolecules. Also exhibits THF-independent aldolase activity toward beta-hydroxyamino acids, producing glycine and aldehydes, via a retro-aldol mechanism. The polypeptide is Serine hydroxymethyltransferase (Acinetobacter baumannii (strain AB307-0294)).